Here is a 472-residue protein sequence, read N- to C-terminus: Uronate isomerase (472 aa).

The protein belongs to the metallo-dependent hydrolases superfamily. Uronate isomerase family.

The catalysed reaction is D-glucuronate = D-fructuronate. The enzyme catalyses aldehydo-D-galacturonate = keto-D-tagaturonate. It functions in the pathway carbohydrate metabolism; pentose and glucuronate interconversion. The sequence is that of Uronate isomerase from Opitutus terrae (strain DSM 11246 / JCM 15787 / PB90-1).